Consider the following 138-residue polypeptide: Putative pre-16S rRNA nuclease (138 aa).

Belongs to the YqgF nuclease family.

The protein resides in the cytoplasm. Could be a nuclease involved in processing of the 5'-end of pre-16S rRNA. In Escherichia coli O45:K1 (strain S88 / ExPEC), this protein is Putative pre-16S rRNA nuclease.